We begin with the raw amino-acid sequence, 109 residues long: Spermidine export protein MdtI (109 aa).

A run of 4 helical transmembrane segments spans residues 6-26 (WVHA…NVFL), 36-56 (IFGL…SQAV), 64-84 (AYAL…WILF), and 88-108 (LNRK…MVKL).

The protein belongs to the drug/metabolite transporter (DMT) superfamily. Small multidrug resistance (SMR) (TC 2.A.7.1) family. MdtI subfamily. Forms a complex with MdtJ.

Its subcellular location is the cell inner membrane. In terms of biological role, catalyzes the excretion of spermidine. This is Spermidine export protein MdtI from Escherichia coli O81 (strain ED1a).